Consider the following 196-residue polypeptide: Probable peptidyl-prolyl cis-trans isomerase (196 aa).

Residues 1 to 26 (MSFIRSALAAAAFVALSIGAVQTASA) form the signal peptide. One can recognise a PPIase cyclophilin-type domain in the interval 29 to 194 (PENTVILKLK…KIIKATIEAD (166 aa)).

It belongs to the cyclophilin-type PPIase family.

The protein localises to the periplasm. It carries out the reaction [protein]-peptidylproline (omega=180) = [protein]-peptidylproline (omega=0). Functionally, PPIases accelerate the folding of proteins. It catalyzes the cis-trans isomerization of proline imidic peptide bonds in oligopeptides. The sequence is that of Probable peptidyl-prolyl cis-trans isomerase (ppi) from Brucella abortus (strain 2308).